We begin with the raw amino-acid sequence, 194 residues long: 21 kDa hemolysin (194 aa).

An N-terminal signal peptide occupies residues 1–19 (MRTRSRSTVRPLWPPPSPA). 2 BON domains span residues 49–118 (DDEV…RTGE) and 127–194 (IDSW…NYVQ).

It is found in the periplasm. In Actinobacillus pleuropneumoniae (Haemophilus pleuropneumoniae), this protein is 21 kDa hemolysin (hly).